A 38-amino-acid polypeptide reads, in one-letter code: Large ribosomal subunit protein bL36 (38 aa).

The protein belongs to the bacterial ribosomal protein bL36 family.

This Thermotoga maritima (strain ATCC 43589 / DSM 3109 / JCM 10099 / NBRC 100826 / MSB8) protein is Large ribosomal subunit protein bL36.